A 509-amino-acid polypeptide reads, in one-letter code: ATP synthase subunit alpha (509 aa).

169–176 (GDRQTGKT) is an ATP binding site.

The protein belongs to the ATPase alpha/beta chains family. As to quaternary structure, F-type ATPases have 2 components, CF(1) - the catalytic core - and CF(0) - the membrane proton channel. CF(1) has five subunits: alpha(3), beta(3), gamma(1), delta(1), epsilon(1). CF(0) has three main subunits: a(1), b(2) and c(9-12). The alpha and beta chains form an alternating ring which encloses part of the gamma chain. CF(1) is attached to CF(0) by a central stalk formed by the gamma and epsilon chains, while a peripheral stalk is formed by the delta and b chains.

It is found in the cell inner membrane. The catalysed reaction is ATP + H2O + 4 H(+)(in) = ADP + phosphate + 5 H(+)(out). Produces ATP from ADP in the presence of a proton gradient across the membrane. The alpha chain is a regulatory subunit. The chain is ATP synthase subunit alpha from Mesorhizobium japonicum (strain LMG 29417 / CECT 9101 / MAFF 303099) (Mesorhizobium loti (strain MAFF 303099)).